Reading from the N-terminus, the 232-residue chain is Large ribosomal subunit protein uL1 (232 aa).

It belongs to the universal ribosomal protein uL1 family. In terms of assembly, part of the 50S ribosomal subunit.

In terms of biological role, binds directly to 23S rRNA. The L1 stalk is quite mobile in the ribosome, and is involved in E site tRNA release. Its function is as follows. Protein L1 is also a translational repressor protein, it controls the translation of the L11 operon by binding to its mRNA. The sequence is that of Large ribosomal subunit protein uL1 from Bartonella henselae (strain ATCC 49882 / DSM 28221 / CCUG 30454 / Houston 1) (Rochalimaea henselae).